Here is a 63-residue protein sequence, read N- to C-terminus: MANPKAKMSKSRRDKRRAQFNARTKAAVTVVCPNCGEPTLPHRACRHCGHYKGRQVTGKVVVA.

Residues 1–20 are disordered; it reads MANPKAKMSKSRRDKRRAQF. Over residues 7-18 the composition is skewed to basic residues; it reads KMSKSRRDKRRA.

Belongs to the bacterial ribosomal protein bL32 family.

The chain is Large ribosomal subunit protein bL32 from Chlorobaculum parvum (strain DSM 263 / NCIMB 8327) (Chlorobium vibrioforme subsp. thiosulfatophilum).